The following is a 178-amino-acid chain: CDP-archaeol synthase (178 aa).

5 consecutive transmembrane segments (helical) span residues 3–23 (LLLL…ANAV), 56–76 (FFGI…VILY), 91–111 (IILS…GSFI), 131–151 (FIIF…NIIV), and 152–172 (LLLV…YKLH).

Belongs to the CDP-archaeol synthase family. It depends on Mg(2+) as a cofactor.

The protein localises to the cell membrane. The catalysed reaction is 2,3-bis-O-(geranylgeranyl)-sn-glycerol 1-phosphate + CTP + H(+) = CDP-2,3-bis-O-(geranylgeranyl)-sn-glycerol + diphosphate. It functions in the pathway membrane lipid metabolism; glycerophospholipid metabolism. Functionally, catalyzes the formation of CDP-2,3-bis-(O-geranylgeranyl)-sn-glycerol (CDP-archaeol) from 2,3-bis-(O-geranylgeranyl)-sn-glycerol 1-phosphate (DGGGP) and CTP. This reaction is the third ether-bond-formation step in the biosynthesis of archaeal membrane lipids. This is CDP-archaeol synthase from Methanococcus maripaludis (strain DSM 14266 / JCM 13030 / NBRC 101832 / S2 / LL).